The following is a 201-amino-acid chain: Probable chemoreceptor glutamine deamidase CheD 2 (201 aa).

This sequence belongs to the CheD family.

The catalysed reaction is L-glutaminyl-[protein] + H2O = L-glutamyl-[protein] + NH4(+). Functionally, probably deamidates glutamine residues to glutamate on methyl-accepting chemotaxis receptors (MCPs), playing an important role in chemotaxis. The polypeptide is Probable chemoreceptor glutamine deamidase CheD 2 (Chromobacterium violaceum (strain ATCC 12472 / DSM 30191 / JCM 1249 / CCUG 213 / NBRC 12614 / NCIMB 9131 / NCTC 9757 / MK)).